The chain runs to 132 residues: UPF0212 protein PYRAB08340 (132 aa).

Belongs to the UPF0212 family.

The protein is UPF0212 protein PYRAB08340 of Pyrococcus abyssi (strain GE5 / Orsay).